The sequence spans 468 residues: Argininosuccinate lyase (468 aa).

The protein belongs to the lyase 1 family. Argininosuccinate lyase subfamily.

The protein resides in the cytoplasm. It carries out the reaction 2-(N(omega)-L-arginino)succinate = fumarate + L-arginine. It functions in the pathway amino-acid biosynthesis; L-arginine biosynthesis; L-arginine from L-ornithine and carbamoyl phosphate: step 3/3. The protein is Argininosuccinate lyase of Paraburkholderia phymatum (strain DSM 17167 / CIP 108236 / LMG 21445 / STM815) (Burkholderia phymatum).